Here is a 556-residue protein sequence, read N- to C-terminus: Testis-specific protein 10-interacting protein (556 aa).

The segment covering methionine 1–glycine 20 has biased composition (polar residues). Disordered regions lie at residues methionine 1–lysine 102 and cysteine 180–aspartate 320. The segment covering lysine 75–lysine 85 has biased composition (basic residues). 2 stretches are compositionally biased toward acidic residues: residues glutamate 213–glutamate 225 and leucine 246–aspartate 260. A compositionally biased stretch (basic residues) spans proline 266–arginine 278. Over residues glutamate 304–aspartate 320 the composition is skewed to basic and acidic residues. Positions leucine 387 to glutamine 463 form a coiled coil. The tract at residues alanine 503–proline 556 is disordered. The span at proline 527–aspartate 543 shows a compositional bias: polar residues.

The protein is Testis-specific protein 10-interacting protein (TSGA10IP) of Bos taurus (Bovine).